A 117-amino-acid polypeptide reads, in one-letter code: UPF0102 protein Rsph17025_0472 (117 aa).

This sequence belongs to the UPF0102 family.

The sequence is that of UPF0102 protein Rsph17025_0472 from Cereibacter sphaeroides (strain ATCC 17025 / ATH 2.4.3) (Rhodobacter sphaeroides).